The chain runs to 272 residues: Type II secretion system protein C (272 aa).

Topologically, residues 1–16 (MNISKLPPLSPSVIRR) are cytoplasmic. A helical transmembrane segment spans residues 17–35 (ILFYLLMLLFCQQLAMIFW). Over 36–272 (RIGLPDNAPV…DIYMEFGGDE (237 aa)) the chain is Periplasmic.

The protein belongs to the GSP C family.

Its subcellular location is the cell inner membrane. In terms of biological role, involved in a type II secretion system (T2SS, formerly general secretion pathway, GSP) for the export of proteins. Required for the translocation of the multiple pectic enzymes. This is Type II secretion system protein C (outC) from Dickeya dadantii (strain 3937) (Erwinia chrysanthemi (strain 3937)).